The sequence spans 211 residues: MAQAIIGAIAASAAGSALGAGIQAGAEAALQSQRYQQDLALQRNTFEHDKDMLSYQVQASNALLAKNLNTRYSMLIAGGLSSADASRAVAGAPVTRLIDWNGTRVAAPRSSATTLRSGGFMAVPMPVQPKSKTPQSSGFSNPAYDMSTVSSRTSSWVQSQNSLRSVSPFHRQALQTVWVTPPGSTSSSSVSSTPYGVFNTDRMPLFANLRR.

This sequence belongs to the norovirus VP2 family. Homooligomer. The portal-like structure consists in 12 copies of VP2. Interacts with capsid protein VP1.

It is found in the virion. The protein resides in the host cytoplasm. In terms of biological role, minor structural protein that forms a portal-like structure at a unique three-fold axis of symmetry, following binding to the host receptor. The channel formed by VP2 may allow the delivery of the viral genome through the host endosomal membrane. This Homo sapiens (Human) protein is Minor capsid protein VP2.